The sequence spans 330 residues: G-protein coupled receptor 3 (330 aa).

Residues 1-42 (MMWGAGSSMAWFSAGSGSVNVSSVDPVEEPTGPATLLPSPRA) are Extracellular-facing. Asn-20 carries an N-linked (GlcNAc...) asparagine glycan. The helical transmembrane segment at 43 to 62 (WDVVLCISGTLVSCENALVV) threads the bilayer. Residues 63 to 74 (AIIVGTPAFRAP) are Cytoplasmic-facing. A helical membrane pass occupies residues 75–98 (MFLLVGSLAVADLLAGLGLVLHFA). Residues 99-110 (ADFCIGSPEMSL) lie on the Extracellular side of the membrane. Residues 111–132 (MLVGVLAMAFTASIGSLLAITV) form a helical membrane-spanning segment. The Cytoplasmic portion of the chain corresponds to 133 to 153 (DRYLSLYNALTYYSETTVTRT). The helical transmembrane segment at 154–173 (YVMLALVWVGALGLGLVPVL) threads the bilayer. Over 174-198 (AWNCRDGLTTCGVVYPLSKNHLVVL) the chain is Extracellular. Residues 199-217 (AIAFFMVFGIMLQLYAQIC) traverse the membrane as a helical segment. Topologically, residues 218-245 (RIVCRHAQQIALQRHLLPASHYVATRKG) are cytoplasmic. The chain crosses the membrane as a helical span at residues 246–272 (IATLAVVLGAFAACWLPFTVYCLLGDA). At 273–277 (DSPRL) the chain is on the extracellular side. A helical membrane pass occupies residues 278 to 299 (YTYLTLLPATYNSMINPVIYAF). Over 300 to 330 (RNQDVQKVLWAICCCCSTSKIPFRSRSPSDV) the chain is Cytoplasmic. Cys-313 is lipidated: S-palmitoyl cysteine. Ser-324, Ser-326, and Ser-328 each carry phosphoserine.

Belongs to the G-protein coupled receptor 1 family. Expressed in both the forebrain and hindbrain, with the highest level in habenula. Lower level expression in the testis. Expressed in several metabolically active peripheral tissues, although at lower levels than in the central nervous system (CNS).

Its subcellular location is the cell membrane. Functionally, constitutively active G-protein coupled receptor that maintains high 3'-5'-cyclic adenosine monophosphate (cAMP) levels that a plays a role in serveral processes including meiotic arrest in oocytes or neuronal development via activation of numerous intracellular signaling pathways. Acts as an essential activator of thermogenic adipocytes and drives thermogenesis via its intrinsic G(s)-coupling activity without the requirement of a ligand. Has a potential role in modulating a number of brain functions, including behavioral responses to stress, amyloid-beta peptide generation in neurons. Stimulates neurite outgrowth in cerebellar granular neurons modulated via PKA, ERK, and most strongly PI3K-mediated signaling pathways. This chain is G-protein coupled receptor 3 (Gpr3), found in Mus musculus (Mouse).